Consider the following 375-residue polypeptide: Flagellar P-ring protein (375 aa).

Positions 1 to 23 are cleaved as a signal peptide; sequence MFNQSFLKYMLFGFFLFSFHAHA.

The protein belongs to the FlgI family. The basal body constitutes a major portion of the flagellar organelle and consists of four rings (L,P,S, and M) mounted on a central rod.

Its subcellular location is the bacterial flagellum basal body. In terms of biological role, assembles around the rod to form the L-ring and probably protects the motor/basal body from shearing forces during rotation. The sequence is that of Flagellar P-ring protein from Buchnera aphidicola subsp. Baizongia pistaciae (strain Bp).